Here is a 74-residue protein sequence, read N- to C-terminus: MNATIFALLLLLNLAMHNAAEQSSETDMDDTLLIPEINRGRCIEEGKWCPKKAPCCGRLECKGPSPKQKKCTRP.

An N-terminal signal peptide occupies residues 1 to 19 (MNATIFALLLLLNLAMHNA). A propeptide spanning residues 20 to 39 (AEQSSETDMDDTLLIPEINR) is cleaved from the precursor. Disulfide bonds link C42/C56, C49/C61, and C55/C71.

It belongs to the neurotoxin 36 family. 01 subfamily. In terms of tissue distribution, expressed by the venom gland.

It localises to the secreted. Its function is as follows. Probable ion channel inhibitor. This Chilobrachys guangxiensis (Chinese earth tiger tarantula) protein is U4-theraphotoxin-Cg1a.